Consider the following 558-residue polypeptide: Glypican-1 (558 aa).

The signal sequence occupies residues 1 to 23; the sequence is MELRARGWWLLCAAAALVACTRG. 7 disulfide bridges follow: cysteine 32–cysteine 68, cysteine 62–cysteine 256, cysteine 69–cysteine 259, cysteine 191–cysteine 343, cysteine 246–cysteine 279, cysteine 268–cysteine 415, and cysteine 272–cysteine 401. 2 N-linked (GlcNAc...) asparagine glycosylation sites follow: asparagine 79 and asparagine 116. The segment at 478–531 is disordered; it reads FQDASDDGSGSGSGGGCPDDACGRRVSKKSSSSRTPLIHALPGLSEQEGQKTSA. O-linked (Xyl...) (heparan sulfate) serine glycans are attached at residues serine 486, serine 488, and serine 490. Serine 530 carries the GPI-anchor amidated serine lipid modification. Residues 531-558 constitute a propeptide, removed in mature form; it reads AATRPEPHYFFLLFLFTLVLAAARPRWR.

The protein belongs to the glypican family. Post-translationally, S-nitrosylated in a Cu(2+)-dependent manner. Nitric acid (NO) is released from the nitrosylated cysteines by ascorbate or by some other reducing agent, in a Cu(2+) or Zn(2+) dependent manner. This free nitric oxide is then capable of cleaving the heparan sulfate side chains. In terms of processing, N- and O-glycosylated. N-glycosylation is mainly of the complex type containing sialic acid. O-glycosylated with heparan sulfate. The heparan sulfate chains can be cleaved either by the action of heparanase or, degraded by a deaminative process that uses nitric oxide (NO) released from the S-nitrosylated cysteines. This process is triggered by ascorbate, or by some other reducing agent, in a Cu(2+)- or Zn(2+) dependent manner. Cu(2+) ions are provided by ceruloproteins such as APP, PRNP or CP which associate with GCP1 in intracellular compartments or lipid rafts. This cell-associated glypican is further processed to give rise to a medium-released species. As to expression, nervous system.

The protein resides in the cell membrane. The protein localises to the endosome. Its subcellular location is the secreted. It localises to the extracellular space. In terms of biological role, cell surface proteoglycan that bears heparan sulfate. May act as a catalyst in increasing the rate of conversion of prion protein PRPN(C) to PRNP(Sc) via associating (via the heparan sulfate side chains) with both forms of PRPN, targeting them to lipid rafts and facilitating their interaction. Required for proper skeletal muscle differentiation by sequestering FGF2 in lipid rafts preventing its binding to receptors (FGFRs) and inhibiting the FGF-mediated signaling. Binds Cu(2+) or Zn(2+) ions. Binds, via the heparan sulfate side chains, alpha-4 (V) collagen and participates in Schwann cell myelination. The polypeptide is Glypican-1 (Gpc1) (Rattus norvegicus (Rat)).